The sequence spans 629 residues: Protein SPT2 homolog (629 aa).

The important for interaction with DNA stretch occupies residues 1-522 (MDFDSVLSIA…SGHRILVKPS (522 aa)). A coiled-coil region spans residues 45 to 72 (QAFLKKKAVEQKNKEQQDKKAKEDLLAK). Positions 53–93 (VEQKNKEQQDKKAKEDLLAKRVELKSDRKARAMASRTKDNF) are enriched in basic and acidic residues. Disordered regions lie at residues 53–181 (VEQK…ASSS), 206–533 (KTEE…TSSY), and 608–629 (EDEEEERRELEEMQRKNAKKRK). Positions 111-123 (KGSSTEEQQSSTK) are enriched in polar residues. The segment covering 127–144 (GDYDDEDNFDYEGTDSES) has biased composition (acidic residues). The stretch at 203-228 (VVKKTEERLRTAEEIRELEMERRVKK) forms a coiled coil. 2 stretches are compositionally biased toward basic and acidic residues: residues 206–247 (KTEE…KDSR) and 257–277 (KHVDRDGKNGRFPRPSEEKHQ). Polar residues-rich tracts occupy residues 278 to 297 (SSSTSKKPKLQASSERTPTS), 305 to 327 (SNSGSSGALNSKSAMKNGASFQA), 335 to 345 (SQGQRPATPSD), 353 to 364 (VSLTQAKSSISG), 387 to 398 (SNFSTSGPSQKP), 437 to 450 (NLQSQQFPGSSRAS), and 462 to 490 (SGSQINRMSSGPGRSQCTVVSETISTKNI). The interval 523–629 (GPALPPITSS…MQRKNAKKRK (107 aa)) is important for interaction with histones. Residues 591–629 (WKEQQKEEARSLRMAVLEDEEEERRELEEMQRKNAKKRK) adopt a coiled-coil conformation.

The protein belongs to the SPT2 family. Interacts with histones. Interacts with a heterotetrameric complex formed by histone H3 and H4, especially when the histone tetramer is not bound to DNA.

It is found in the nucleus. Its subcellular location is the nucleolus. Histone chaperone that stabilizes pre-existing histone tetramers and regulates replication-independent histone exchange on chromatin. Required for normal chromatin refolding in the coding region of transcribed genes, and for the suppression of spurious transcription. Binds DNA and histones and promotes nucleosome assembly (in vitro). Facilitates formation of tetrameric histone complexes containing histone H3 and H4. Modulates RNA polymerase 1-mediated transcription. Binds DNA, with a preference for branched DNA species, such as Y-form DNA and Holliday junction DNA. This Danio rerio (Zebrafish) protein is Protein SPT2 homolog (spty2d1).